The primary structure comprises 376 residues: uncharacterized protein (376 aa).

The first 31 residues, 1-31 (MSRHKVYKAISSYVIIAIIIIAIVAVVGVLL), serve as a signal peptide directing secretion. The interval 37-57 (SSSSVTSTTTPTTSSSVSPSS) is disordered.

It belongs to the bacterial solute-binding protein 1 family. WtpA subfamily.

This is an uncharacterized protein from Sulfurisphaera tokodaii (strain DSM 16993 / JCM 10545 / NBRC 100140 / 7) (Sulfolobus tokodaii).